The sequence spans 218 residues: uncharacterized protein (218 aa).

A compositionally biased stretch (basic and acidic residues) spans Met184–Ala202. The interval Met184–Lys218 is disordered. Basic residues predominate over residues Gln205–Lys218.

This is an uncharacterized protein from Mycoplasma pneumoniae (strain ATCC 29342 / M129 / Subtype 1) (Mycoplasmoides pneumoniae).